Consider the following 331-residue polypeptide: 2-oxoglutarate-dependent dioxygenase (331 aa).

A Fe2OG dioxygenase domain is found at 186 to 292; the sequence is PACPLRLLHY…RYSVVFFMDG (107 aa). His-214, Asp-216, and His-272 together coordinate Fe cation. Arg-283 provides a ligand contact to 2-oxoglutarate.

Belongs to the iron/ascorbate-dependent oxidoreductase family. Fe(2+) is required as a cofactor.

The protein operates within mycotoxin biosynthesis. Its function is as follows. 2-oxoglutarate-dependent dioxygenase; part of the gene cluster that mediates the biosynthesis of the selective antifungal agent ascochitine, an o-quinone methide that plays a possible protective role against other microbial competitors in nature and is considered to be important for pathogenicity of legume-associated Didymella species. The pathway probably begins with the synthesis of a keto-aldehyde intermediate by the ascochitine non-reducing polyketide synthase pksAC from successive condensations of 4 malonyl-CoA units, presumably with a simple acetyl-CoA starter unit. Release of the keto-aldehyde intermediate is consistent with the presence of the C-terminal reductive release domain. The HR-PKS (orf7) probably makes a diketide starter unit which is passed to the non-reducing polyketide synthase pksAC for further extension, producing ascochital and ascochitine. The aldehyde dehydrogenase (orf1), the 2-oxoglutarate-dependent dioxygenase (orf3) and the dehydrogenase (orf9) are probably involved in subsequent oxidations of methyl groups to the carboxylic acid of the heterocyclic ring. The ascochitine gene cluster also includes a gene encoding a short peptide with a cupin domain (orf2) that is often found in secondary metabolite gene clusters and which function has still to be determined. This is 2-oxoglutarate-dependent dioxygenase from Didymella fabae (Leaf and pod spot disease fungus).